We begin with the raw amino-acid sequence, 521 residues long: AAA ATPase forming ring-shaped complexes (521 aa).

Positions 4 to 44 form a coiled coil; the sequence is TEDLAALNDRLMAKNHALAEALSRAGKELTKAKSQLAQLAQ. 235–240 contacts ATP; that stretch reads GNGKTM.

The protein belongs to the AAA ATPase family. Homohexamer. Assembles into a hexameric ring structure.

This Bifidobacterium longum (strain DJO10A) protein is AAA ATPase forming ring-shaped complexes.